Here is a 429-residue protein sequence, read N- to C-terminus: Inositol-3-phosphate synthase 1 (429 aa).

Residues 12–32 form a helical membrane-spanning segment; the sequence is LGVLVVGVGGAVATTMIVGTL. NAD(+)-binding residues include A22, V23, D79, A116, A165, T167, Y201, S244, R276, D277, and K290.

This sequence belongs to the myo-inositol 1-phosphate synthase family. Homotetramer. NAD(+) is required as a cofactor.

It localises to the membrane. It catalyses the reaction D-glucose 6-phosphate = 1D-myo-inositol 3-phosphate. The protein operates within polyol metabolism; myo-inositol biosynthesis; myo-inositol from D-glucose 6-phosphate: step 1/2. Key enzyme in myo-inositol biosynthesis pathway that catalyzes the conversion of glucose 6-phosphate to 1D-myo-inositol 3-phosphate in a NAD-dependent manner. This chain is Inositol-3-phosphate synthase 1, found in Bacteroides thetaiotaomicron (strain ATCC 29148 / DSM 2079 / JCM 5827 / CCUG 10774 / NCTC 10582 / VPI-5482 / E50).